Here is a 500-residue protein sequence, read N- to C-terminus: ATP synthase subunit alpha (500 aa).

An ATP-binding site is contributed by 169-176 (GDRQTGKT).

It belongs to the ATPase alpha/beta chains family. As to quaternary structure, F-type ATPases have 2 components, CF(1) - the catalytic core - and CF(0) - the membrane proton channel. CF(1) has five subunits: alpha(3), beta(3), gamma(1), delta(1), epsilon(1). CF(0) has three main subunits: a(1), b(2) and c(9-12). The alpha and beta chains form an alternating ring which encloses part of the gamma chain. CF(1) is attached to CF(0) by a central stalk formed by the gamma and epsilon chains, while a peripheral stalk is formed by the delta and b chains.

It is found in the cell membrane. The catalysed reaction is ATP + H2O + 4 H(+)(in) = ADP + phosphate + 5 H(+)(out). Functionally, produces ATP from ADP in the presence of a proton gradient across the membrane. The alpha chain is a regulatory subunit. In Lactococcus lactis subsp. cremoris (strain SK11), this protein is ATP synthase subunit alpha.